The primary structure comprises 500 residues: V-type proton ATPase subunit B (500 aa).

It belongs to the ATPase alpha/beta chains family. V-ATPase is a heteromultimeric enzyme composed of a peripheral catalytic V1 complex (main components: subunits A, B, C, D, E, and F) attached to an integral membrane V0 proton pore complex (main component: the proteolipid protein).

Its function is as follows. Non-catalytic subunit of the peripheral V1 complex of vacuolar ATPase. V-ATPase is responsible for acidifying a variety of intracellular compartments in eukaryotic cells. This Cyanidium caldarium (Red alga) protein is V-type proton ATPase subunit B.